We begin with the raw amino-acid sequence, 410 residues long: Polyadenylation and cleavage factor homolog 5 (410 aa).

The span at M1–T17 shows a compositional bias: polar residues. Residues M1–I32 are disordered. A coiled-coil region spans residues S191–N214. The C2H2-type zinc-finger motif lies at R247 to H269.

As to quaternary structure, forms a complex with cleavage and polyadenylation specificity factor (CPSF) subunits CSTF77, CLPS3, PCFS4 and PCFS1.

It localises to the nucleus. In Arabidopsis thaliana (Mouse-ear cress), this protein is Polyadenylation and cleavage factor homolog 5.